The sequence spans 418 residues: LL-diaminopimelate aminotransferase (418 aa).

2 residues coordinate substrate: tyrosine 25 and glycine 52. Pyridoxal 5'-phosphate-binding positions include tyrosine 78, 115 to 116 (SK), tyrosine 140, asparagine 190, tyrosine 221, and 248 to 250 (SFS). Residues lysine 116, tyrosine 140, and asparagine 190 each contribute to the substrate site. Lysine 251 bears the N6-(pyridoxal phosphate)lysine mark. Arginine 259 lines the pyridoxal 5'-phosphate pocket.

This sequence belongs to the class-I pyridoxal-phosphate-dependent aminotransferase family. Homodimer. Pyridoxal 5'-phosphate serves as cofactor.

The protein localises to the cytoplasm. The enzyme catalyses (2S,6S)-2,6-diaminopimelate + 2-oxoglutarate = (S)-2,3,4,5-tetrahydrodipicolinate + L-glutamate + H2O + H(+). Its pathway is amino-acid biosynthesis; L-lysine biosynthesis via DAP pathway; LL-2,6-diaminopimelate from (S)-tetrahydrodipicolinate (aminotransferase route): step 1/1. In terms of biological role, involved in the synthesis of meso-diaminopimelate (m-DAP or DL-DAP), required for both lysine and peptidoglycan biosynthesis. Catalyzes the direct conversion of tetrahydrodipicolinate to LL-diaminopimelate, a reaction that requires three enzymes in E.coli. The protein is LL-diaminopimelate aminotransferase (dapL) of Methanocaldococcus jannaschii (strain ATCC 43067 / DSM 2661 / JAL-1 / JCM 10045 / NBRC 100440) (Methanococcus jannaschii).